The primary structure comprises 58 residues: UPF0337 protein OB2685 (58 aa).

Composition is skewed to basic and acidic residues over residues 1–22 and 30–46; these read MSDG…EAKD and DPQR…KGEA. The interval 1–58 is disordered; it reads MSDGMKDKAKAIGKKIKGEAKDQWGSATDDPQRKAEGKRDKAKGEAQDTIADAKNNNK.

This sequence belongs to the UPF0337 (CsbD) family.

In Oceanobacillus iheyensis (strain DSM 14371 / CIP 107618 / JCM 11309 / KCTC 3954 / HTE831), this protein is UPF0337 protein OB2685.